A 323-amino-acid polypeptide reads, in one-letter code: Sodium/potassium-transporting ATPase subunit beta-2 (323 aa).

Over M1 to K50 the chain is Cytoplasmic. A helical; Signal-anchor for type II membrane protein transmembrane segment spans residues I51–W71. The Extracellular portion of the chain corresponds to A72–D323. Intrachain disulfides connect C153–C165 and C175–C189. N-linked (GlcNAc...) asparagine glycosylation is found at N180 and N206. C241 and C298 form a disulfide bridge.

It belongs to the X(+)/potassium ATPases subunit beta family. As to quaternary structure, the sodium/potassium-transporting ATPase is composed of a catalytic alpha subunit, an auxiliary non-catalytic beta subunit and an additional regulatory subunit. In terms of tissue distribution, in embryos, it is expressed in the neurons of the CNS and PNS, in Garland cells and posterior spiracles. In adults, it shows a nervous system specific distribution: optic lobes, brain, thoracic ganglia and axonal pathways in the leg. Both isoforms concentrate in the adult head, isoform 2.2 being predominant. Both isoforms are weakly expressed in the thorax and very poorly expressed in the abdomen.

Its subcellular location is the cell membrane. Functionally, this is the non-catalytic component of the active enzyme, which catalyzes the hydrolysis of ATP coupled with the exchange of Na(+) and K(+) ions across the plasma membrane. The beta subunit regulates, through assembly of alpha/beta heterodimers, the number of sodium pumps transported to the plasma membrane. The chain is Sodium/potassium-transporting ATPase subunit beta-2 (nrv2) from Drosophila melanogaster (Fruit fly).